Reading from the N-terminus, the 424-residue chain is UPF0229 protein Sde_0732 (424 aa).

The segment at 52–109 (IGIPSKDISEPVFHHDSGGVDTRVLPGNDQFHSGDRIQRPPSGQGGGGSGKGASDSGE) is disordered. The segment covering 58–69 (DISEPVFHHDSG) has biased composition (basic and acidic residues).

The protein belongs to the UPF0229 family.

This chain is UPF0229 protein Sde_0732, found in Saccharophagus degradans (strain 2-40 / ATCC 43961 / DSM 17024).